Reading from the N-terminus, the 853-residue chain is Auxin response factor 23 (853 aa).

The tract at residues 118-141 (PESKQQEDNGSTEEEVPSAPAAGH) is disordered. The TF-B3 DNA-binding region spans 149–251 (FCKTLTASDT…ELRVGVRRAM (103 aa)). Disordered stretches follow at residues 422 to 484 (ESEP…RMQM) and 647 to 723 (PAKS…QGVS). A compositionally biased stretch (polar residues) spans 425–455 (PNGTQRTFQTQENATPKSGFGNSSELESAQK). Over residues 672 to 686 (EWRRPDVTEVEKCSD) the composition is skewed to basic and acidic residues. Positions 706 to 723 (PSSQQASRNMSCKSQGVS) are enriched in polar residues. In terms of domain architecture, PB1 spans 725–809 (RSCKKVHKQG…HKIFIYTREE (85 aa)). The segment at 815–853 (PGTLNSRSEDSHANSMERGSVGREMRGCLSTSSLNSENC) is disordered. The segment covering 843-853 (LSTSSLNSENC) has biased composition (polar residues).

The protein belongs to the ARF family. As to quaternary structure, homodimers and heterodimers. Interacts with CRL1. Expressed in roots, culms, leaves and young panicles.

Its subcellular location is the nucleus. Its function is as follows. Auxin response factors (ARFs) are transcriptional factors that bind specifically to the DNA sequence 5'-TGTCTC-3' found in the auxin-responsive promoter elements (AuxREs). The polypeptide is Auxin response factor 23 (ARF23) (Oryza sativa subsp. japonica (Rice)).